Reading from the N-terminus, the 336-residue chain is UDP-N-acetylenolpyruvoylglucosamine reductase (336 aa).

Residues 17 to 188 (GFDVRARYAS…TAVTLRLSRD (172 aa)) form the FAD-binding PCMH-type domain. The active site involves arginine 164. The active-site Proton donor is the serine 236. The active site involves glutamate 332.

The protein belongs to the MurB family. It depends on FAD as a cofactor.

It is found in the cytoplasm. The catalysed reaction is UDP-N-acetyl-alpha-D-muramate + NADP(+) = UDP-N-acetyl-3-O-(1-carboxyvinyl)-alpha-D-glucosamine + NADPH + H(+). The protein operates within cell wall biogenesis; peptidoglycan biosynthesis. Functionally, cell wall formation. In Cupriavidus pinatubonensis (strain JMP 134 / LMG 1197) (Cupriavidus necator (strain JMP 134)), this protein is UDP-N-acetylenolpyruvoylglucosamine reductase.